The following is a 102-amino-acid chain: Small ribosomal subunit protein uS10 (102 aa).

This sequence belongs to the universal ribosomal protein uS10 family. As to quaternary structure, part of the 30S ribosomal subunit.

Involved in the binding of tRNA to the ribosomes. In Desulforamulus reducens (strain ATCC BAA-1160 / DSM 100696 / MI-1) (Desulfotomaculum reducens), this protein is Small ribosomal subunit protein uS10.